The sequence spans 296 residues: Adrenocorticotropic hormone receptor (296 aa).

The Extracellular portion of the chain corresponds to Met1–Asp23. Residues Asn12 and Asn17 are each glycosylated (N-linked (GlcNAc...) asparagine). Cystine bridges form between Cys21/Cys253 and Cys245/Cys251. Residues Val24–Val49 traverse the membrane as a helical segment. Residues Ile50–Pro58 lie on the Cytoplasmic side of the membrane. A helical transmembrane segment spans residues Met59–Leu79. Residues Glu80–Asp104 are Extracellular-facing. Residues Ile105–Ala126 traverse the membrane as a helical segment. Topologically, residues Asp127–Thr147 are cytoplasmic. A helical transmembrane segment spans residues Ile148–Phe168. Over Ser169 to Ser180 the chain is Extracellular. A helical membrane pass occupies residues Leu181–Leu199. At Ala200–Gly217 the chain is on the cytoplasmic side. The helical transmembrane segment at Ala218–Phe244 threads the bilayer. Topologically, residues Cys245–Ser256 are extracellular. The helical transmembrane segment at Leu257–Phe278 threads the bilayer. Residues Arg279–Tyr296 lie on the Cytoplasmic side of the membrane. Residue Cys293 is the site of S-palmitoyl cysteine attachment.

Belongs to the G-protein coupled receptor 1 family. In terms of assembly, homodimer. Interacts with corticotropin (ACTH). Interacts with MRAP; this interaction targets MC2R to the plasma membrane. Interacts with MRAP2; competing with MRAP for binding to MC2R and impairing the binding of corticotropin (ACTH). Post-translationally, ubiquitinated by MGRN1 that may be involved in post-endocytic trafficking and/or degradation of internalized receptor.

Its subcellular location is the cell membrane. In terms of biological role, hormone receptor primarily expressed in adrenal cortex that plays a key role in regulating adrenocortical function. Upon corticotropin (ACTH) binding, facilitates the release of adrenal glucocorticoids, including cortisol and corticosterone. In addition, MC2R is required for fetal and neonatal adrenal gland development. Mechanistically, activates adenylate cyclase (cAMP), the MAPK cascade as well as the cAMP-dependent protein kinase A pathway leading to steroidogenic factor 1/NR5A1-mediated transcriptional activation. In Mus musculus (Mouse), this protein is Adrenocorticotropic hormone receptor (Mc2r).